A 232-amino-acid chain; its full sequence is DNA repair protein RecO (232 aa).

This sequence belongs to the RecO family.

Involved in DNA repair and RecF pathway recombination. This is DNA repair protein RecO from Francisella tularensis subsp. novicida (strain U112).